Reading from the N-terminus, the 177-residue chain is Acetyltransferase (177 aa).

The region spanning 4–174 is the N-acetyltransferase domain; that stretch reads AQLRRVTAES…PTAIYFKTLG (171 aa). Residues glutamate 27, 96-98, 104-109, 130-131, and tyrosine 141 contribute to the acetyl-CoA site; these read LMV, GRGLGR, and DT.

In terms of biological role, renders tabtoxin-producing pathogens tolerant to their own phytotoxins. This chain is Acetyltransferase (ttr), found in Pseudomonas amygdali pv. tabaci (Pseudomonas syringae pv. tabaci).